Here is a 275-residue protein sequence, read N- to C-terminus: AA9 family lytic polysaccharide monooxygenase D (275 aa).

Positions 1–17 (MKLSLLAIAAIAPFVSA) are cleaved as a signal peptide. Positions 18 and 101 each coordinate Cu(2+). C67 and C189 form a disulfide bridge. H176 serves as a coordination point for O2. Y186 contacts Cu(2+). A glycan (N-linked (GlcNAc...) asparagine) is linked at N220.

It belongs to the polysaccharide monooxygenase AA9 family. Cu(2+) serves as cofactor.

It is found in the secreted. The catalysed reaction is [(1-&gt;4)-beta-D-glucosyl]n+m + reduced acceptor + O2 = 4-dehydro-beta-D-glucosyl-[(1-&gt;4)-beta-D-glucosyl]n-1 + [(1-&gt;4)-beta-D-glucosyl]m + acceptor + H2O.. Functionally, lytic polysaccharide monooxygenase (LPMO) that depolymerizes crystalline and amorphous polysaccharides via the oxidation of scissile alpha- or beta-(1-4)-glycosidic bonds, yielding C1 or C4 oxidation products. Catalysis by LPMOs requires the reduction of the active-site copper from Cu(II) to Cu(I) by a reducing agent and H(2)O(2) or O(2) as a cosubstrate. This is AA9 family lytic polysaccharide monooxygenase D from Aspergillus tamarii.